The sequence spans 345 residues: MQYKELLHKLLTGTDLSGKEMEECFSGIMLGEYPDSVIAAILALLQKKGVTPEEVAGAYFAIISKALPVQLGDNAVDTCGTGGDQAGTFNISTVAAIIANGAGVPIAKHGNRSVTSRCGSADVLEQLGYRILLPPDKTEMLFRETGFAFLFAPLYHPAMKAVAHIRRELGIKTIFNMLGPLVNPAKVHRQVVGVFDMRVMEIYAQSLIRTGCSHALVVHGKTENGDGLDEASICGPTRIVEIQNGEITCHDVEPETFSLSRCTIAELQGGDSSRNADILLRILDGSATKAQTDAALFSAAMACYVSGRATCIDDGLSKAKGSLESGNASKQFSRILALNAELAGK.

Residues Gly-80, Gly-83–Asp-84, Thr-88, Asn-90–Thr-93, Lys-108–Ser-116, and Ser-120 contribute to the 5-phospho-alpha-D-ribose 1-diphosphate site. Gly-80 lines the anthranilate pocket. Mg(2+) is bound at residue Ser-92. Position 111 (Asn-111) interacts with anthranilate. Arg-166 contributes to the anthranilate binding site. Residues Asp-229 and Glu-230 each coordinate Mg(2+).

It belongs to the anthranilate phosphoribosyltransferase family. In terms of assembly, homodimer. Mg(2+) is required as a cofactor.

The enzyme catalyses N-(5-phospho-beta-D-ribosyl)anthranilate + diphosphate = 5-phospho-alpha-D-ribose 1-diphosphate + anthranilate. It functions in the pathway amino-acid biosynthesis; L-tryptophan biosynthesis; L-tryptophan from chorismate: step 2/5. Its function is as follows. Catalyzes the transfer of the phosphoribosyl group of 5-phosphorylribose-1-pyrophosphate (PRPP) to anthranilate to yield N-(5'-phosphoribosyl)-anthranilate (PRA). This chain is Anthranilate phosphoribosyltransferase, found in Chlorobium phaeobacteroides (strain BS1).